The sequence spans 374 residues: MPLFATPFAQLDLIRQPEQDGEPLQAFDAADEYLLNHLYERGVTAQSRILVLNDAFGALAASLAPHVQLTSSGDSHLGFLALRKNLARNGLDLGSVRFVPASETAVGPFDHVLVKVPKTLALLEEQLIRLHGQLAPGAQVVAAGMVKHLPRAAGDLLERYIGPMHASLAVKKARLLVAEAAERPAPRSPYPTRYRLEQPPLTLLNHANVFCREGLDIGTRAFLPHLPRSLGALRAADLGCGNGVLGIAYALLNPQAELTLVDESYMAVQSARENWRAALGERPAAFRADDGLAGQAAGSLDLVLCNPPFHQQQVVGDFLAWRMFLQARDALAAGGELWIVGNRHLGYHAKLKRLFRGVEQVAANPKFVILKAGK.

The protein belongs to the methyltransferase superfamily. RlmG family.

The protein localises to the cytoplasm. The catalysed reaction is guanosine(1835) in 23S rRNA + S-adenosyl-L-methionine = N(2)-methylguanosine(1835) in 23S rRNA + S-adenosyl-L-homocysteine + H(+). Specifically methylates the guanine in position 1835 (m2G1835) of 23S rRNA. This is Ribosomal RNA large subunit methyltransferase G from Pseudomonas paraeruginosa (strain DSM 24068 / PA7) (Pseudomonas aeruginosa (strain PA7)).